Consider the following 221-residue polypeptide: Translation initiation factor 6 (221 aa).

Belongs to the eIF-6 family.

Its function is as follows. Binds to the 50S ribosomal subunit and prevents its association with the 30S ribosomal subunit to form the 70S initiation complex. The polypeptide is Translation initiation factor 6 (Methanocella arvoryzae (strain DSM 22066 / NBRC 105507 / MRE50)).